The chain runs to 906 residues: Cadherin-2 (906 aa).

The first 25 residues, 1-25, serve as a signal peptide directing secretion; sequence MCRIAGGPRTLLPLLAALLQASLEA. Residues 26 to 159 constitute a propeptide that is removed on maturation; it reads SGELALCKTG…HSGALQRQKR (134 aa). S96 carries the phosphoserine modification. Cadherin domains follow at residues 160-267, 268-382, 383-497, 498-603, and 604-717; these read DWVI…RPEF, LHQV…PPEF, TAMT…NPYF, APNP…DNAP, and QVLP…RIVG. The Extracellular segment spans residues 160-724; that stretch reads DWVIPPINLP…IVGAGLGTGT (565 aa). E170 serves as a coordination point for Ca(2+). N190 carries N-linked (GlcNAc...) asparagine glycosylation. Positions 226, 228, 259, 260, 261, 262, and 263 each coordinate Ca(2+). N273 carries an N-linked (GlcNAc...) asparagine glycan. Residues D293, D295, and N301 each contribute to the Ca(2+) site. N-linked (GlcNAc...) asparagine glycosylation is present at N325. D353 contacts Ca(2+). N-linked (GlcNAc...) asparagine glycosylation is found at N402, N572, N622, N651, and N692. The chain crosses the membrane as a helical span at residues 725–745; it reads IIAILLCIIILLILVLMFVVW. Residues 746–906 lie on the Cytoplasmic side of the membrane; it reads MKRRDKERQA…LADMYGGGDD (161 aa). Residues 863–880 show a composition bias toward low complexity; the sequence is SGSTAGSLSSLNSSSSGG. The interval 863–883 is disordered; sequence SGSTAGSLSSLNSSSSGGDQD.

In terms of assembly, homodimer (via extracellular region). Can also form heterodimers with other cadherins (via extracellular region). Dimerization occurs in trans, i.e. with a cadherin chain from another cell. Interacts with PCDH8; this complex may also include TAOK2. The interaction with PCDH8 may lead to internalization through TAOK2/p38 MAPK pathway. Identified in a complex containing FGFR4, NCAM1, CDH2, PLCG1, FRS2, SRC, SHC1, GAP43 and CTTN. May interact with OBSCN (via protein kinase domain 2). Interacts with FBXO45. In terms of processing, cleaved by MMP24. Ectodomain cleavage leads to the generation of a soluble 90 kDa N-terminal soluble fragment and a 45 kDa membrane-bound C-terminal fragment 1 (CTF1), which is further cleaved by gamma-secretase into a 35 kDa. Cleavage in neural stem cells by MMP24 affects CDH2-mediated anchorage of neural stem cells to ependymocytes in the adult subependymal zone, leading to modulate neural stem cell quiescence. May be phosphorylated by OBSCN. In testis, expressed in Sertoli and germ cells.

Its subcellular location is the cell membrane. The protein resides in the sarcolemma. The protein localises to the cell junction. It localises to the cell surface. It is found in the desmosome. Its subcellular location is the adherens junction. Calcium-dependent cell adhesion protein; preferentially mediates homotypic cell-cell adhesion by dimerization with a CDH2 chain from another cell. Cadherins may thus contribute to the sorting of heterogeneous cell types. Acts as a regulator of neural stem cells quiescence by mediating anchorage of neural stem cells to ependymocytes in the adult subependymal zone: upon cleavage by MMP24, CDH2-mediated anchorage is affected, leading to modulate neural stem cell quiescence. Plays a role in cell-to-cell junction formation between pancreatic beta cells and neural crest stem (NCS) cells, promoting the formation of processes by NCS cells. Required for proper neurite branching. Required for pre- and postsynaptic organization. CDH2 may be involved in neuronal recognition mechanism. In hippocampal neurons, may regulate dendritic spine density. The polypeptide is Cadherin-2 (Cdh2) (Rattus norvegicus (Rat)).